Consider the following 59-residue polypeptide: Alpha-conotoxin CIA (59 aa).

The N-terminal stretch at 1 to 16 (MFTVFLLVVLTITVVS) is a signal peptide. Positions 17–42 (FPSDRASDGRDDEAKDERSDMYKSKR) are excised as a propeptide. Disulfide bonds link Cys-46-Cys-51 and Cys-47-Cys-57. Residue Cys-57 is modified to Cysteine amide.

This sequence belongs to the conotoxin A superfamily. In terms of tissue distribution, expressed by the venom duct.

The protein localises to the secreted. Its function is as follows. Alpha-conotoxins act on postsynaptic membranes, they bind to the nicotinic acetylcholine receptors (nAChR) and thus inhibit them. This toxin blocks the rat muscle nAChRs alpha-1-beta-1-gamma-delta (CHRNA1-CHRNB1-CHRNG-CHRND) (IC(50)=5.7 nM) and the rat neuronal nAChR alpha-3-beta-2/CHRNA3-CHRNB2 (IC(50)=2060 nM). In vivo, intramuscular injection into zebrafish produces rapid flaccid paralysis. This Conus catus (Cat cone) protein is Alpha-conotoxin CIA.